The primary structure comprises 292 residues: Glycine--tRNA ligase alpha subunit (292 aa).

The protein belongs to the class-II aminoacyl-tRNA synthetase family. As to quaternary structure, tetramer of two alpha and two beta subunits.

Its subcellular location is the cytoplasm. The catalysed reaction is tRNA(Gly) + glycine + ATP = glycyl-tRNA(Gly) + AMP + diphosphate. The protein is Glycine--tRNA ligase alpha subunit of Buchnera aphidicola subsp. Schizaphis graminum (strain Sg).